Here is a 371-residue protein sequence, read N- to C-terminus: MTRVTMDQDTENKVLVIKNMDSGYLVAGEQVTLEDVSYDATEPLAEDELMVQLLYATYDLFKRDLASSSADATELRGRKPVETMSIAQVIKSNNKQFQEGDMVIGRLPVQQYVLIKADDATELKLLENPCEFDDIRLFLSVLGVPGLLAFSSLYEIGRPKKGETILIAGASDEIGQLVGQMARLEGLKVFGSVESDEKLDFLITELGFDGGFNYAKESPYEALPRLVPNGIDIYYDNLSWMSRLNIGGLDTHFDLLGSRHLNAAFSSMRRYGRIMFYGTIAEQTVLDPIIGMFLHNTVLKRLTIRGFGLSDPSFGKKWGKLHMERMQQWVKEEKLKIPTFEITGMDNAAKAFVEAFYSSENTHTHTILAVT.

Residues Asp172–Gly175, Lys198, Tyr214, Asn237, Tyr277–Gln283, and Phe307–Leu309 contribute to the NADP(+) site.

This sequence belongs to the NADP-dependent oxidoreductase L4BD family.

Its pathway is secondary metabolite biosynthesis. Functionally, NADP-dependent oxidoreductase; part of the lna gene cluster that mediates the biosynthesis of diastereomeric piperazines. Lna and lnb clusters encode sets of enzymes that produce overlapping sets of previously undescribed metabolites such as piperazinomycin-like metabolites or morpholine. The lna and lnb biosynthetic pathways appear to be part of a signaling network that controls the formation of sclerotia, a resilient overwintering structure. One primary function of the non-canonical nonribosomal peptide synthetases lnaA and lnbA consists in the reduction of L-tyrosine. The presence in the clusters of tailoring enzymes such as the oxidoreductases lnaB, lnbB, lnaE or lnbE, as well as of the cytochrome P450 monooxygenases lnaC, lnaD, or lnbC, might explain formation of various diastereomeric piperazines. In Aspergillus flavus (strain ATCC 200026 / FGSC A1120 / IAM 13836 / NRRL 3357 / JCM 12722 / SRRC 167), this protein is NADP-dependent oxidoreductase lnaE.